A 463-amino-acid polypeptide reads, in one-letter code: ATP sulfurylase 1, chloroplastic (463 aa).

Residues 1–48 (MASMAAVLSKTPFLSQPLTKSSPNSDLPFAAVSFPSKSLRRRVGSIRA) constitute a chloroplast transit peptide.

The protein belongs to the sulfate adenylyltransferase family. In terms of assembly, homotetramer.

It is found in the plastid. The protein localises to the chloroplast stroma. The enzyme catalyses sulfate + ATP + H(+) = adenosine 5'-phosphosulfate + diphosphate. Its pathway is sulfur metabolism; hydrogen sulfide biosynthesis; sulfite from sulfate: step 1/3. Functionally, mediates selenate (Se) reduction, and promotes Se and sulfur (S) uptake and assimilation. The chain is ATP sulfurylase 1, chloroplastic (APS1) from Arabidopsis thaliana (Mouse-ear cress).